The chain runs to 148 residues: uncharacterized protein (148 aa).

The chain crosses the membrane as a helical span at residues 22-40 (YFLSLTVVISIIHLFTTCV). The segment at 43 to 141 (HNHSTHFPYL…YYPISRHYLH (99 aa)) is histidine-rich.

Its subcellular location is the host membrane. This is an uncharacterized protein from African swine fever virus (strain Badajoz 1971 Vero-adapted) (Ba71V).